Reading from the N-terminus, the 163-residue chain is UPF0262 protein RPE_4483 (163 aa).

This sequence belongs to the UPF0262 family.

The polypeptide is UPF0262 protein RPE_4483 (Rhodopseudomonas palustris (strain BisA53)).